The sequence spans 464 residues: MARESCASETVSAAAVLFAWGANSYGQLGLGHKEDVFLPQQLSDFCQAGCIKSVTGGGGHSAVVTDGGDLFVCGLNKDGQLGLGHTEEVLRFTICKPLRGCPIRQVACGWDFTIMLTEKGQVLSCGSNAFGQLGVPHGPRKCVVPQAIECLREKVVCVAAGLRHALATTATGSVFQWGTGLASSGRRLCPGQNLPLFLTAKEPSRVTGLENSTAVCAVAGSDHSASLTDTGELYVWGRNKHGQLASRAVFLPLPQRIEAHYFQDEKVTAVWSGWTHLVAKTETGKVFTWGRADYGQLGRRLEPPEAQKPVEQDSSLAFQGPQNSVPSPLHCLTGATEISCGSEHNLAVIRDKCCSWGWNEHGMCGDGTESNVWTPTPVQALPPSPSRLLLVGCGAGHSLAVCQLPAHPVPCQDLKVTCPLPDDTENTESQGAVDRDRLEGETISDLNPDRTRNGGGGCESETVQ.

7 RCC1 repeats span residues 15 to 67 (AVLF…VTDG), 68 to 119 (GDLF…LTEK), 120 to 171 (GQVL…TTAT), 172 to 230 (GSVF…LTDT), 231 to 283 (GELY…KTET), 284 to 351 (GKVF…VIRD), and 352 to 402 (KCCS…LAVC). A disordered region spans residues 422–464 (DDTENTESQGAVDRDRLEGETISDLNPDRTRNGGGGCESETVQ). Ser429 carries the phosphoserine modification.

In terms of assembly, interacts with SEC5. The interaction occurs only in the presence of magnesium or manganese and is stimulated by dCTP or GTP.

It is found in the cytoplasm. The protein resides in the nucleus. In terms of biological role, probable guanine nucleotide exchange factor (GEF), which may be involved in the secretion process. The chain is Secretion-regulating guanine nucleotide exchange factor (Sergef) from Mus musculus (Mouse).